We begin with the raw amino-acid sequence, 345 residues long: D-fructose 1,6-bisphosphatase class 2/sedoheptulose 1,7-bisphosphatase (345 aa).

Positions 33, 57, 97, and 100 each coordinate Mn(2+). Substrate-binding positions include E100–T102, Y131, R176–R178, and D198–D200. Mn(2+) is bound at residue E225.

It belongs to the FBPase class 2 family. In terms of assembly, homotetramer. Requires Mn(2+) as cofactor.

It carries out the reaction beta-D-fructose 1,6-bisphosphate + H2O = beta-D-fructose 6-phosphate + phosphate. The catalysed reaction is D-sedoheptulose 1,7-bisphosphate + H2O = D-sedoheptulose 7-phosphate + phosphate. It participates in carbohydrate biosynthesis; Calvin cycle. Functionally, catalyzes the hydrolysis of fructose 1,6-bisphosphate (Fru 1,6-P2) and sedoheptulose 1,7-bisphosphate (Sed 1,7-P2) to fructose 6-phosphate and sedoheptulose 7-phosphate, respectively. This is D-fructose 1,6-bisphosphatase class 2/sedoheptulose 1,7-bisphosphatase from Nostoc sp. (strain PCC 7120 / SAG 25.82 / UTEX 2576).